Reading from the N-terminus, the 410-residue chain is Peptidase T (410 aa).

A Zn(2+)-binding site is contributed by histidine 77. Aspartate 79 is a catalytic residue. Aspartate 140 serves as a coordination point for Zn(2+). The Proton acceptor role is filled by glutamate 174. 3 residues coordinate Zn(2+): glutamate 175, aspartate 197, and histidine 379.

This sequence belongs to the peptidase M20B family. The cofactor is Zn(2+).

It localises to the cytoplasm. The catalysed reaction is Release of the N-terminal residue from a tripeptide.. Cleaves the N-terminal amino acid of tripeptides. The polypeptide is Peptidase T (Desulfitobacterium hafniense (strain DSM 10664 / DCB-2)).